The primary structure comprises 212 residues: ATP phosphoribosyltransferase (212 aa).

It belongs to the ATP phosphoribosyltransferase family. Short subfamily. In terms of assembly, heteromultimer composed of HisG and HisZ subunits.

The protein resides in the cytoplasm. The catalysed reaction is 1-(5-phospho-beta-D-ribosyl)-ATP + diphosphate = 5-phospho-alpha-D-ribose 1-diphosphate + ATP. Its pathway is amino-acid biosynthesis; L-histidine biosynthesis; L-histidine from 5-phospho-alpha-D-ribose 1-diphosphate: step 1/9. Its function is as follows. Catalyzes the condensation of ATP and 5-phosphoribose 1-diphosphate to form N'-(5'-phosphoribosyl)-ATP (PR-ATP). Has a crucial role in the pathway because the rate of histidine biosynthesis seems to be controlled primarily by regulation of HisG enzymatic activity. The chain is ATP phosphoribosyltransferase from Clostridium botulinum (strain Langeland / NCTC 10281 / Type F).